Consider the following 382-residue polypeptide: Telomere-binding protein OPG082 (382 aa).

It belongs to the orthopoxvirus OPG082 family.

The protein localises to the virion. Functionally, binds to the hairpin form of the viral telomeric sequence. Might direct genome encapsidation into the virus particle. This is Telomere-binding protein OPG082 (OPG082) from Variola virus (isolate Human/India/Ind3/1967) (VARV).